The sequence spans 86 residues: Muscarinic toxin 7 (86 aa).

An N-terminal signal peptide occupies residues Met1 to Thr21. Finger loop regions lie at residues Thr23–Asp37, Leu44–Cys63, and Thr66–Cys78. Intrachain disulfides connect Cys24/Cys45, Cys38/Cys63, Cys67/Cys78, and Cys79/Cys84.

This sequence belongs to the three-finger toxin family. Short-chain subfamily. Aminergic toxin sub-subfamily. Expressed by the venom gland.

The protein localises to the secreted. Functionally, binds specifically and irreversibly to an allosteric site of the muscarinic acetylcholine M1 receptor (CHRM1) at subnanomolar concentrations and shows a very slow dissociation rate. It also inhibits agonist-mediated guanosine 5'-O-(3'-thiotriphosphate) (GTP-g-S) binding and downstream signaling, and decreases the dissociation rate of orthosteric antagonists (N-methylscopolamine (NMS) or pirenzepine). Is a potent negative allosteric modulator (NAM) for CHRM1 activation and a positive allosteric modulator (PAM) for antagonist binding. The protein is Muscarinic toxin 7 of Dendroaspis angusticeps (Eastern green mamba).